The primary structure comprises 702 residues: A-type inclusion protein A25 homolog (702 aa).

Residues 342 to 380 (TNTGIEEPHATGGDKEDQPIKVVHPPNNDKDDAIKSYNP) form a disordered region. Residues 347-360 (EEPHATGGDKEDQP) show a composition bias toward basic and acidic residues. Coiled-coil stretches lie at residues 420–522 (NGGE…RDGK) and 548–692 (EIDK…NNKT).

This sequence belongs to the poxviridae A25 protein family. As to quaternary structure, interacts (via N-terminus) with protein A26.

The protein resides in the virion. Functionally, structural protein that forms a matrix surrounding the mature virion (MV) through interaction with protein A26. Presence of protein A25 in the virion structurally prevents direct virus-cell fusion mechanism. The protein is A-type inclusion protein A25 homolog of Variola virus (isolate Human/India/Ind3/1967) (VARV).